Reading from the N-terminus, the 152-residue chain is Small ribosomal subunit protein uS15 (152 aa).

Positions 1–11 (MAKMHTKRKGK) are enriched in basic residues. The disordered stretch occupies residues 1 to 24 (MAKMHTKRKGKSSSTRPNRTEPPE).

The protein belongs to the universal ribosomal protein uS15 family. In terms of assembly, part of the 30S ribosomal subunit.

The chain is Small ribosomal subunit protein uS15 from Methanosarcina mazei (strain ATCC BAA-159 / DSM 3647 / Goe1 / Go1 / JCM 11833 / OCM 88) (Methanosarcina frisia).